Consider the following 782-residue polypeptide: Endonuclease MutS2 (782 aa).

Residue 336–343 (GPNTGGKT) participates in ATP binding. A Smr domain is found at 707–782 (LDLRGYRYDE…GFGVTVVEIK (76 aa)).

This sequence belongs to the DNA mismatch repair MutS family. MutS2 subfamily. In terms of assembly, homodimer. Binds to stalled ribosomes, contacting rRNA.

Its function is as follows. Endonuclease that is involved in the suppression of homologous recombination and thus may have a key role in the control of bacterial genetic diversity. Functionally, acts as a ribosome collision sensor, splitting the ribosome into its 2 subunits. Detects stalled/collided 70S ribosomes which it binds and splits by an ATP-hydrolysis driven conformational change. Acts upstream of the ribosome quality control system (RQC), a ribosome-associated complex that mediates the extraction of incompletely synthesized nascent chains from stalled ribosomes and their subsequent degradation. Probably generates substrates for RQC. The protein is Endonuclease MutS2 of Staphylococcus saprophyticus subsp. saprophyticus (strain ATCC 15305 / DSM 20229 / NCIMB 8711 / NCTC 7292 / S-41).